The following is a 532-amino-acid chain: Protein PTST homolog 2, chloroplastic (532 aa).

A chloroplast-targeting transit peptide spans 1–71 (MVSINSGPIS…KPRKKSCCSR (71 aa)). Disordered stretches follow at residues 165–201 (QLPNCNSPEMDKTLNHGDLDLSSNLSSSTEQVESRND), 256–292 (EVDGSRGSGEYAQSRYQGAKSVSGKPGLSDSPTSETW), 314–347 (SSGLTGVKKDDTKKDSGDSMNGKDRIASSSEDVN), and 367–388 (HSLRSPPDKVVTSKDSETTAGN). The segment covering 173–183 (EMDKTLNHGDL) has biased composition (basic and acidic residues). Positions 320 to 339 (VKKDDTKKDSGDSMNGKDRI) are enriched in basic and acidic residues. Positions 389-454 (LENLSDDWEY…ASRALRLLRT (66 aa)) form a coiled coil.

In terms of assembly, interacts with PTST3 and SS4. Interacts with MFP1; the interaction is essential for the initiation of starch granules biosynthesis in leaf chloroplasts, for the correct location of the process in the stromal spaces between the thylakoid membranes, and for the association of this protein with the thylakoid membranes. Interacts with PII1/MRC; the interaction is essential for the initiation of starch granules biosynthesis in leaf chloroplasts.

The protein localises to the plastid. The protein resides in the chloroplast. Its subcellular location is the chloroplast thylakoid membrane. Functionally, involved in starch granule initiation in leaf chloroplasts. Binds and delivers suitable maltooligosaccharide substrates to starch synthase 4 (SS4). This is Protein PTST homolog 2, chloroplastic from Arabidopsis thaliana (Mouse-ear cress).